Here is a 356-residue protein sequence, read N- to C-terminus: CMP-sialic acid transporter 2 (356 aa).

Residues 1-24 show a composition bias toward basic and acidic residues; it reads MEYRRVKDQESYDVVSQKDIESPG. The interval 1 to 44 is disordered; it reads MEYRRVKDQESYDVVSQKDIESPGERSLSSTSATSSLSTAGASK. The Cytoplasmic portion of the chain corresponds to 1–52; the sequence is MEYRRVKDQESYDVVSQKDIESPGERSLSSTSATSSLSTAGASKGKNSWKLK. Residues 27–44 are compositionally biased toward low complexity; the sequence is SLSSTSATSSLSTAGASK. Residues 53-73 traverse the membrane as a helical segment; the sequence is SIVTLALTLLTSSQAILIVWS. Topologically, residues 74–82 are lumenal; it reads KRAGKYEYS. Residues 83 to 103 form a helical membrane-spanning segment; the sequence is VTTANFSVEALKCLLSLIALY. Residues 104–125 are Cytoplasmic-facing; sequence RTWNSQGVTEDNRLSTSFDEVS. Residues 126–146 traverse the membrane as a helical segment; that stretch reads VYPIPAILYMVKNLLQYYIFA. Residues 147-149 lie on the Lumenal side of the membrane; it reads YVD. A helical transmembrane segment spans residues 150-172; it reads APAYQILKNLNIISTGVLYRIIL. Residues 173 to 175 are Cytoplasmic-facing; the sequence is KKK. Residues 176-196 traverse the membrane as a helical segment; sequence LSEIQWAAFILLCAGCTTAQL. Residues 197-211 lie on the Lumenal side of the membrane; sequence NPSSDHVLQTPIQGW. Residues 212 to 232 form a helical membrane-spanning segment; that stretch reads VMAIVMALLSGFAGVYTEAII. The Cytoplasmic portion of the chain corresponds to 233–239; it reads KKRPSRN. The helical transmembrane segment at 240–260 threads the bilayer; it reads INVQNFWLYIFGMLFNLVAIC. Over 261-277 the chain is Lumenal; it reads VQDFDAVMNKGFFHGYS. The chain crosses the membrane as a helical span at residues 278–298; it reads FITVLMILNHALSGIAVSMVM. At 299–314 the chain is on the cytoplasmic side; it reads KYADNIVKVYSTSVAM. Residues 315 to 335 form a helical membrane-spanning segment; sequence LLTAVVSVFLFGFHLSLAFFL. Over 336-356 the chain is Lumenal; that stretch reads GSTVVSVSVYLHSVGKPQPQK.

Belongs to the nucleotide-sugar transporter family. CMP-Sialate:CMP antiporter (TC 2.A.7.12) subfamily. Expressed in roots, leaves and stalks.

It is found in the golgi apparatus membrane. Sugar transporter involved in the transport of CMP-sialic acid from the cytoplasm into the Golgi. May transport important nucleotide sugars such as CMP-Kdo (2-keto-3-deoxy-D-manno-octulosonic acid) in physiological conditions. This chain is CMP-sialic acid transporter 2, found in Oryza sativa subsp. japonica (Rice).